The following is a 362-amino-acid chain: Vignain (362 aa).

The first 20 residues, 1-20, serve as a signal peptide directing secretion; the sequence is MAMKKLLWVVLSLSLVLGVA. Positions 21–126 are cleaved as a propeptide — activation peptide; that stretch reads NSFDFHEKDL…SGTFMYEKVG (106 aa). Disulfide bonds link Cys-149–Cys-191, Cys-183–Cys-224, and Cys-282–Cys-334. Residue Cys-152 is part of the active site. Active-site residues include His-288 and Asn-309. 2 N-linked (GlcNAc...) asparagine glycosylation sites follow: Asn-326 and Asn-346. Residues 353 to 362 constitute a propeptide, removed in mature form; sequence GSLSSPKDEL. Positions 359 to 362 match the Prevents secretion from ER motif; it reads KDEL.

It belongs to the peptidase C1 family. Post-translationally, the mature protein is not glycosylated. In terms of processing, the precursor stored in the endoplasmic reticulum lumen is processed during the transport to proteins bodies to two dominant mature forms that differ by a single amino acid residue at the N-terminus.

Its subcellular location is the endoplasmic reticulum lumen. The protein localises to the vacuole. The protein resides in the aleurone grain. In terms of biological role, thought to be involved in the hydrolysis of stored seed proteins. In vitro, catalyzes the hydrolysis of proteins, such as azocasein. Shows a preferential cleavage for Asn-|-Xaa in small molecule substrates such as Boc-Asn-|-OPHNO(2). This is Vignain from Vigna mungo (Black gram).